A 61-amino-acid polypeptide reads, in one-letter code: Small ribosomal subunit protein uS14B (61 aa).

Residues cysteine 24, cysteine 27, cysteine 40, and cysteine 43 each contribute to the Zn(2+) site.

Belongs to the universal ribosomal protein uS14 family. Zinc-binding uS14 subfamily. In terms of assembly, part of the 30S ribosomal subunit. Contacts proteins S3 and S10. Requires Zn(2+) as cofactor.

Binds 16S rRNA, required for the assembly of 30S particles and may also be responsible for determining the conformation of the 16S rRNA at the A site. The polypeptide is Small ribosomal subunit protein uS14B (Kineococcus radiotolerans (strain ATCC BAA-149 / DSM 14245 / SRS30216)).